The primary structure comprises 248 residues: Triosephosphate isomerase (248 aa).

The substrate site is built by asparagine 10 and lysine 12. The active-site Electrophile is histidine 95. The Proton acceptor role is filled by glutamate 165.

The protein belongs to the triosephosphate isomerase family. In terms of assembly, homodimer.

The enzyme catalyses D-glyceraldehyde 3-phosphate = dihydroxyacetone phosphate. The protein operates within carbohydrate biosynthesis; gluconeogenesis. It participates in carbohydrate degradation; glycolysis; D-glyceraldehyde 3-phosphate from glycerone phosphate: step 1/1. The protein is Triosephosphate isomerase (TPI1) of Kluyveromyces lactis (strain ATCC 8585 / CBS 2359 / DSM 70799 / NBRC 1267 / NRRL Y-1140 / WM37) (Yeast).